The following is a 290-amino-acid chain: Enoyl-CoA hydratase, mitochondrial (290 aa).

The N-terminal 27 residues, 1-27 (MAALRALLPRVRAPLRPWLFCPVQRSF), are a transit peptide targeting the mitochondrion. Substrate-binding positions include 98 to 101 (ADIK) and Gly141. Residue Lys101 is modified to N6-acetyllysine; alternate. Lys101 is modified (N6-succinyllysine; alternate). Residue Lys204 is modified to N6-succinyllysine. Lys211 carries the post-translational modification N6-acetyllysine.

This sequence belongs to the enoyl-CoA hydratase/isomerase family. As to quaternary structure, homohexamer; dimer of trimers.

Its subcellular location is the mitochondrion matrix. It catalyses the reaction a (3S)-3-hydroxyacyl-CoA = a (2E)-enoyl-CoA + H2O. The catalysed reaction is a (3E)-enoyl-CoA = a 4-saturated (2E)-enoyl-CoA. It carries out the reaction (3E)-hexenoyl-CoA = (2E)-hexenoyl-CoA. The enzyme catalyses (3S)-3-hydroxybutanoyl-CoA = (2E)-butenoyl-CoA + H2O. It catalyses the reaction 3-hydroxyisovaleryl-CoA = 3-methylbut-2-enoyl-CoA + H2O. The catalysed reaction is 3-hydroxypropanoyl-CoA = acryloyl-CoA + H2O. It carries out the reaction 3-hydroxybutanoyl-CoA = (2E)-butenoyl-CoA + H2O. The enzyme catalyses 2-methylpropenoyl-CoA + H2O = (S)-3-hydroxyisobutanoyl-CoA. It catalyses the reaction (3S)-hydroxyhexanoyl-CoA = (2E)-hexenoyl-CoA + H2O. The catalysed reaction is (3S)-hydroxydecanoyl-CoA = (2E)-decenoyl-CoA + H2O. Its pathway is lipid metabolism; fatty acid beta-oxidation. Converts unsaturated trans-2-enoyl-CoA species ((2E)-enoyl-CoA) to the corresponding 3(S)-3-hydroxyacyl-CoA species through addition of a water molecule to the double bond. Catalyzes the hydration of medium- and short-chained fatty enoyl-CoA thioesters from 4 carbons long (C4) up to C16. Has high substrate specificity for crotonyl-CoA ((2E)-butenoyl-CoA) and moderate specificity for acryloyl-CoA, 3-methylcrotonyl-CoA (3-methyl-(2E)-butenoyl-CoA) and methacrylyl-CoA ((2E)-2-methylpropenoyl-CoA). Can bind tiglyl-CoA (2-methylcrotonoyl-CoA), but hydrates only a small amount of this substrate. Plays a key role in the beta-oxidation spiral of short- and medium-chain fatty acid oxidation. At a lower rate than the hydratase reaction, catalyzes the isomerase reaction of trans-3-enoyl-CoA species (such as (3E)-hexenoyl-CoA) to trans-2-enoyl-CoA species (such as (2E)-hexenoyl-CoA), which are subsequently hydrated to 3(S)-3-hydroxyacyl-CoA species (such as (3S)-hydroxyhexanoyl-CoA). The polypeptide is Enoyl-CoA hydratase, mitochondrial (ECHS1) (Bos taurus (Bovine)).